Reading from the N-terminus, the 308-residue chain is UPF0026 protein HP_0117 (308 aa).

In terms of domain architecture, Radical SAM core spans 18-248 (FGKSLGVDLS…SLPKRSITQA (231 aa)). Positions 33, 37, and 40 each coordinate [4Fe-4S] cluster.

The protein belongs to the UPF0026 family. It depends on [4Fe-4S] cluster as a cofactor.

In Helicobacter pylori (strain ATCC 700392 / 26695) (Campylobacter pylori), this protein is UPF0026 protein HP_0117.